We begin with the raw amino-acid sequence, 580 residues long: (3S,6E)-nerolidol synthase 1, chloroplastic (580 aa).

Residues 1–31 constitute a chloroplast transit peptide; it reads MASSSWAFFKVFNPQIAPKSISHIGQSDLMQ. Mg(2+)-binding residues include aspartate 334, aspartate 338, aspartate 478, serine 482, and glutamate 486. Residues 334–338 carry the DDXXD motif motif; that stretch reads DDIFD.

It belongs to the terpene synthase family. Tpsg subfamily. It depends on Mg(2+) as a cofactor. The cofactor is Mn(2+).

Its subcellular location is the plastid. The protein localises to the chloroplast. The enzyme catalyses (2E,6E)-farnesyl diphosphate + H2O = (3S,6E)-nerolidol + diphosphate. It functions in the pathway secondary metabolite biosynthesis; terpenoid biosynthesis. Involved in monoterpene (C10) and sesquiterpene (C15) biosynthesis. Converts geranyl diphosphate (GPP) into S-linalool and farnesyl diphosphate (FPP) into (3S)-E-nerolidol. Probably not expressed in wild strawberry species. In Fragaria vesca (Woodland strawberry), this protein is (3S,6E)-nerolidol synthase 1, chloroplastic.